Consider the following 361-residue polypeptide: Mitogen-activated protein kinase 14 (361 aa).

One can recognise a Protein kinase domain in the interval tyrosine 25–phenylalanine 309. Residues valine 31–valine 39 and lysine 54 contribute to the ATP site. Aspartate 151 functions as the Proton acceptor in the catalytic mechanism. A Phosphothreonine modification is found at threonine 181. The short motif at threonine 181–tyrosine 183 is the TXY element. Tyrosine 183 carries the post-translational modification Phosphotyrosine.

The protein belongs to the protein kinase superfamily. CMGC Ser/Thr protein kinase family. MAP kinase subfamily. Mg(2+) is required as a cofactor. Post-translationally, dually phosphorylated on Thr-181 and Tyr-183, which activates the enzyme.

The catalysed reaction is L-seryl-[protein] + ATP = O-phospho-L-seryl-[protein] + ADP + H(+). It carries out the reaction L-threonyl-[protein] + ATP = O-phospho-L-threonyl-[protein] + ADP + H(+). Activated by tyrosine and threonine phosphorylation. Its function is as follows. Serine/threonine kinase which acts as an essential component of the MAP kinase signal transduction pathway. mapk14a is one of the four p38 MAPKs which play an important role in the cascades of cellular responses evoked by extracellular stimuli such as pro-inflammatory cytokines or physical stress leading to direct activation of transcription factors. Accordingly, p38 MAPKs phosphorylate a broad range of proteins and it has been estimated that they may have approximately 200 to 300 substrates each. Some of the targets are downstream kinases which are activated through phosphorylation and further phosphorylate additional targets. MPK2 is activated by upstream MAPKK/MAPKKK and stimulates MAPKAP kinase 2 to phosphorylate small heat shock proteins. Does not phosphorylate myelin basic protein or MAPKAP kinase 1. This is Mitogen-activated protein kinase 14 (mapk14) from Xenopus laevis (African clawed frog).